The chain runs to 443 residues: 3-phosphoshikimate 1-carboxyvinyltransferase (443 aa).

The disordered stretch occupies residues 1–22; sequence MSHASRPTPLEARGSTPLTGRV. Lys-28, Ser-29, and Arg-33 together coordinate 3-phosphoshikimate. Lys-28 serves as a coordination point for phosphoenolpyruvate. Residues Gly-101 and Arg-129 each coordinate phosphoenolpyruvate. Residues Ser-174, Gln-176, Asp-326, and Lys-353 each coordinate 3-phosphoshikimate. Gln-176 contacts phosphoenolpyruvate. Asp-326 serves as the catalytic Proton acceptor. 2 residues coordinate phosphoenolpyruvate: Arg-357 and Arg-400.

It belongs to the EPSP synthase family. Monomer.

The protein resides in the cytoplasm. The catalysed reaction is 3-phosphoshikimate + phosphoenolpyruvate = 5-O-(1-carboxyvinyl)-3-phosphoshikimate + phosphate. The protein operates within metabolic intermediate biosynthesis; chorismate biosynthesis; chorismate from D-erythrose 4-phosphate and phosphoenolpyruvate: step 6/7. In terms of biological role, catalyzes the transfer of the enolpyruvyl moiety of phosphoenolpyruvate (PEP) to the 5-hydroxyl of shikimate-3-phosphate (S3P) to produce enolpyruvyl shikimate-3-phosphate and inorganic phosphate. The chain is 3-phosphoshikimate 1-carboxyvinyltransferase from Afipia carboxidovorans (strain ATCC 49405 / DSM 1227 / KCTC 32145 / OM5) (Oligotropha carboxidovorans).